We begin with the raw amino-acid sequence, 81 residues long: UPF0248 protein TK0315 (81 aa).

Belongs to the UPF0248 family.

The protein is UPF0248 protein TK0315 of Thermococcus kodakarensis (strain ATCC BAA-918 / JCM 12380 / KOD1) (Pyrococcus kodakaraensis (strain KOD1)).